Consider the following 371-residue polypeptide: Cytochrome b (371 aa).

4 helical membrane passes run 25 to 45 (FGSL…FLAI), 69 to 90 (WIMQ…YTHI), 105 to 125 (WLSG…GYVL), and 170 to 190 (FFAL…IHII). His-75 and His-89 together coordinate heme b. 2 residues coordinate heme b: His-174 and His-188. His-193 contacts a ubiquinone. 4 helical membrane-spanning segments follow: residues 218-238 (YKDM…MTFA), 280-300 (LGGT…PFTH), 312-332 (LTQI…WTAT), and 339-358 (FIYI…IMNP).

The protein belongs to the cytochrome b family. In terms of assembly, the cytochrome bc1 complex contains 3 respiratory subunits (MT-CYB, CYC1 and UQCRFS1), 2 core proteins (UQCRC1 and UQCRC2) and probably 6 low-molecular weight proteins. It depends on heme b as a cofactor.

The protein localises to the mitochondrion inner membrane. In terms of biological role, component of the ubiquinol-cytochrome c reductase complex (complex III or cytochrome b-c1 complex) that is part of the mitochondrial respiratory chain. The b-c1 complex mediates electron transfer from ubiquinol to cytochrome c. Contributes to the generation of a proton gradient across the mitochondrial membrane that is then used for ATP synthesis. The protein is Cytochrome b (MT-CYB) of Micruroides euryxanthus (Sonoran coral snake).